Here is a 199-residue protein sequence, read N- to C-terminus: Adenylyl-sulfate kinase (199 aa).

Residues 1 to 21 (MSQSSNITWHDSEVTKSDRQQ) are disordered. The segment covering 10-19 (HDSEVTKSDR) has biased composition (basic and acidic residues). 34 to 41 (GLSGSGKS) contributes to the ATP binding site. The active-site Phosphoserine intermediate is the S108.

Belongs to the APS kinase family.

The enzyme catalyses adenosine 5'-phosphosulfate + ATP = 3'-phosphoadenylyl sulfate + ADP + H(+). The protein operates within sulfur metabolism; hydrogen sulfide biosynthesis; sulfite from sulfate: step 2/3. Its function is as follows. Catalyzes the synthesis of activated sulfate. In Staphylococcus haemolyticus (strain JCSC1435), this protein is Adenylyl-sulfate kinase.